Reading from the N-terminus, the 778-residue chain is Aerobic respiration control sensor protein ArcB (778 aa).

Topologically, residues 1-25 are cytoplasmic; the sequence is MKQIRLLAQYYVDLMMKLGLVRFSM. Residues 26 to 46 form a helical membrane-spanning segment; it reads LLALALVVLAIVVQMAVTMVL. Over 47–57 the chain is Periplasmic; the sequence is HGQVESIDVIR. The chain crosses the membrane as a helical span at residues 58 to 78; it reads SIFFGLLITPWAVYFLSVVVE. The Cytoplasmic portion of the chain corresponds to 79-778; it reads QLEESRQRLS…KAWVAKATKK (700 aa). The region spanning 153–223 is the PAS domain; sequence QSSFLRSFLD…ETDEKVFRHN (71 aa). The PAC domain maps to 226-278; sequence LTYEQWLDYPDGRKACFEIRKVPYYDRVGKRHGLMGFGRDITERKRYQDALER. The Histidine kinase domain maps to 289 to 507; sequence TISHELRTPL…TFTLTIHAPS (219 aa). The residue at position 292 (His-292) is a Phosphohistidine; by autocatalysis. Residues 527–643 enclose the Response regulatory domain; it reads NVLLVEDIEL…ALTAMIKKFW (117 aa). At Asp-576 the chain carries 4-aspartylphosphate. Residues 678–771 enclose the HPt domain; it reads GPKLITDGLA…RHDVEVLKAW (94 aa). His-717 is modified (phosphohistidine).

Activation requires a sequential transfer of a phosphate group from a His in the primary transmitter domain, to an Asp in the receiver domain and to a His in the secondary transmitter domain.

It is found in the cell inner membrane. It carries out the reaction ATP + protein L-histidine = ADP + protein N-phospho-L-histidine.. Member of the two-component regulatory system ArcB/ArcA. Sensor-regulator protein for anaerobic repression of the arc modulon. Activates ArcA via a four-step phosphorelay. ArcB can also dephosphorylate ArcA by a reverse phosphorelay involving His-717 and Asp-576. The polypeptide is Aerobic respiration control sensor protein ArcB (arcB) (Escherichia coli (strain K12)).